Here is a 382-residue protein sequence, read N- to C-terminus: Mannitol-1-phosphate 5-dehydrogenase (382 aa).

3–14 contacts NAD(+); it reads AIHFGAGNIGRG.

Belongs to the mannitol dehydrogenase family.

It catalyses the reaction D-mannitol 1-phosphate + NAD(+) = beta-D-fructose 6-phosphate + NADH + H(+). The polypeptide is Mannitol-1-phosphate 5-dehydrogenase (Psychromonas ingrahamii (strain DSM 17664 / CCUG 51855 / 37)).